The primary structure comprises 495 residues: 1-aminocyclopropane-1-carboxylate synthase 6 (495 aa).

The substrate site is built by glutamate 58 and tyrosine 96. Position 280 is an N6-(pyridoxal phosphate)lysine (lysine 280). Serine 480, serine 483, and serine 488 each carry phosphoserine.

Belongs to the class-I pyridoxal-phosphate-dependent aminotransferase family. Homodimer and heterodimer. In vivo, the relevance of heterodimerization with other ACS enzymes is however unsure. Interacts with GRF3. It depends on pyridoxal 5'-phosphate as a cofactor. In terms of processing, phosphorylated on serine residue by MAP kinase (MPK6). May be processed at its C-terminus. Expressed in roots and flowers.

The catalysed reaction is S-adenosyl-L-methionine = 1-aminocyclopropane-1-carboxylate + S-methyl-5'-thioadenosine + H(+). It functions in the pathway alkene biosynthesis; ethylene biosynthesis via S-adenosyl-L-methionine; ethylene from S-adenosyl-L-methionine: step 1/2. In terms of biological role, 1-aminocyclopropane-1-carboxylate synthase (ACS) enzymes catalyze the conversion of S-adenosyl-L-methionine (SAM) into 1-aminocyclopropane-1-carboxylate (ACC), a direct precursor of ethylene. Involved in bacterial flagellin-induced ethylene production. In Arabidopsis thaliana (Mouse-ear cress), this protein is 1-aminocyclopropane-1-carboxylate synthase 6 (ACS6).